Consider the following 765-residue polypeptide: Alpha,alpha-trehalose phosphorylase (765 aa).

352–353 contacts substrate; that stretch reads WD. The Proton donor role is filled by Glu479. 591 to 592 is a substrate binding site; that stretch reads KQ.

This sequence belongs to the glycosyl hydrolase 65 family. In terms of assembly, homodimer.

It catalyses the reaction alpha,alpha-trehalose + phosphate = beta-D-glucose 1-phosphate + D-glucose. It functions in the pathway glycan degradation; trehalose degradation. Its function is as follows. Catalyzes the reversible phosphorolytic cleavage of trehalose. Phosphorolysis is specific for trehalose. The protein is Alpha,alpha-trehalose phosphorylase (treP) of Geobacillus stearothermophilus (Bacillus stearothermophilus).